We begin with the raw amino-acid sequence, 559 residues long: MENIKVAKVGNVKFVNKGNELNGTLHLTAYHSIFSISENGKEIWTAYSMINNVKLCSNEKSFCIRIQCRDFMFFCWRFQSTEDAMDVYDTLQELMSINSINMLYAFYYMPSGDEEKLPSSWKSFLLENEYRRMGVGDSTQADGAGGNWRITKINENYSECHSYPQALAVPASISDSVIYYGCKYRSKNRFPTLTYLHKNSFSITRASQPLVGIRQNRSAQDEKLVEAIFATSIIPGKENLIVDARPSTNAMANIAVGAGSENMDHYRFAKKIYLGIDNIHVMRDSLNKIVNALKNTDISAAPPLIELLNRSSWLKHLANILQGAVLIVKTVHFRHAHVLVHCSDGWDRTSQLCALPQLCLDPYYRTIEGFFALVEKDWLSFGHRFAERCCHLPGKRIFTIDSSYSEEPPQSSPSSTLQYTFSTVRSALSGFSIDHSEKMMSPVFHQFLDCVWQIMDQFPNCFEFNERFLRRLLYHLYSCQYGSFLYNSERERAQASVSTHTRCIWDYFLSRKDEFKNPNYVPYDDVIMPDPSSLRWWSASFAQPDENMNIPSPSESPSL.

In terms of domain architecture, Myotubularin phosphatase spans 120–541 (SWKSFLLENE…SSLRWWSASF (422 aa)). Cysteine 342 functions as the Phosphocysteine intermediate in the catalytic mechanism.

This sequence belongs to the protein-tyrosine phosphatase family. Non-receptor class myotubularin subfamily.

The protein resides in the cytoplasm. It carries out the reaction a 1,2-diacyl-sn-glycero-3-phospho-(1D-myo-inositol-3-phosphate) + H2O = a 1,2-diacyl-sn-glycero-3-phospho-(1D-myo-inositol) + phosphate. In terms of biological role, lipid phosphatase which dephosphorylates phosphatidylinositol 3-monophosphate (PI3P). Involved in the control of PI3P-dependent signaling and in the maintenance of endosomal system integrity. The polypeptide is Phosphoinositide 3-phosphatase (Schizosaccharomyces pombe (strain 972 / ATCC 24843) (Fission yeast)).